Reading from the N-terminus, the 269-residue chain is Aquaporin-1 (269 aa).

Topologically, residues 1-11 (MASEIKKKLFW) are cytoplasmic. The chain crosses the membrane as a helical span at residues 12–29 (RAVVAEFLAMTLFVFISI). Residues 30–46 (GSALGFNYPLERNQTLV) are Extracellular-facing. Residues 47–65 (QDNVKVSLAFGLSIATLAQ) traverse the membrane as a helical segment. Over 66-68 (SVG) the chain is Cytoplasmic. An intramembrane segment occupies 69–82 (HISGAHLNPAVTLG). The NPA 1 motif lies at 76 to 78 (NPA). Residues 83 to 90 (LLLSCQIS) lie on the Cytoplasmic side of the membrane. Residues 91–109 (ILRAVMYIIAQCVGAIVAT) form a helical membrane-spanning segment. The Extracellular segment spans residues 110–133 (AILSGITSSLVDNSLGRNDLAHGV). Residues 134–153 (NSGQGLGIEIIGTLQLVLCV) form a helical membrane-spanning segment. At 154–163 (LATTDRRRRD) the chain is on the cytoplasmic side. A helical membrane pass occupies residues 164 to 181 (LGGSAPLAIGLSVALGHL). Topologically, residues 182 to 186 (LAIDY) are extracellular. The stretch at 187 to 199 (TGCGINPARSFGS) is an intramembrane region. Residues 192–194 (NPA) carry the NPA 2 motif. Residues 200-206 (AVLTRNF) are Extracellular-facing. A glycan (N-linked (GlcNAc...) asparagine) is linked at asparagine 205. Residues 207-224 (SNHWIFWVGPFIGGALAV) traverse the membrane as a helical segment. Residues 225–269 (LIYDFILAPRSSDFTDRMKVWTSGQVEEYDLDADDINSRVEMKPK) are Cytoplasmic-facing. Residue serine 247 is modified to Phosphoserine. Tyrosine 253 is modified (phosphotyrosine). Position 262 is a phosphoserine (serine 262).

It belongs to the MIP/aquaporin (TC 1.A.8) family. As to quaternary structure, homotetramer; each monomer provides an independent water pore. Component of the ankyrin-1 complex in the erythrocyte, composed of ANK1, RHCE, RHAG, SLC4A1, EPB42, GYPA, GYPB and AQP1. Interacts with EPHB2; involved in endolymph production in the inner ear. Identified in a complex with STOM. Interacts (via the N-terminal) with ANK1 (via ANK 1-5 repeats). Interacts (via the C-terminal) with EPB42. In terms of tissue distribution, detected in erythrocytes (at protein level). In the kidney, expressed on luminal and basal borders of proximal tubules and in the thin limb of Henle's loop (at protein level).

The protein resides in the cell membrane. The catalysed reaction is H2O(in) = H2O(out). It catalyses the reaction nitric oxide(out) = nitric oxide(in). The enzyme catalyses CO2(out) = CO2(in). It carries out the reaction glycerol(in) = glycerol(out). The catalysed reaction is H2O2(out) = H2O2(in). It catalyses the reaction K(+)(in) = K(+)(out). The enzyme catalyses Na(+)(in) = Na(+)(out). Forms a water channel that facilitates the transport of water across cell membranes, playing a crucial role in water homeostasis in various tissues. Could also be permeable to small solutes including hydrogen peroxide, glycerol and gases such as amonnia (NH3), nitric oxide (NO) and carbon dioxide (CO2). Recruited to the ankyrin-1 complex, a multiprotein complex of the erythrocyte membrane, it could be part of a CO2 metabolon, linking facilitated diffusion of CO2 across the membrane, anion exchange of Cl(-)/HCO3(-) and interconversion of dissolved CO2 and carbonic acid in the cytosol. In vitro, it shows non-selective gated cation channel activity and may be permeable to cations like K(+) and Na(+) in vivo. This Mus musculus (Mouse) protein is Aquaporin-1.